Here is a 131-residue protein sequence, read N- to C-terminus: Single-stranded DNA-binding protein 2 (131 aa).

An SSB domain is found at 1–103 (MYNKVIMIGR…VLASSFQLLE (103 aa)). The Important for interaction with partner proteins signature appears at 126-131 (EEELPF).

As to quaternary structure, homotetramer.

In terms of biological role, plays an important role in DNA replication, recombination and repair. Binds to ssDNA and to an array of partner proteins to recruit them to their sites of action during DNA metabolism. The chain is Single-stranded DNA-binding protein 2 (ssb2) from Streptococcus agalactiae serotype III (strain NEM316).